A 993-amino-acid polypeptide reads, in one-letter code: Desmoglein-3 (993 aa).

A signal peptide spans 1–23 (MTCLFPRALGSLALLMVVLLVQG). A propeptide spanning residues 24 to 49 (ELHVKPGGQHREDGTALQLAKRRYKR) is cleaved from the precursor. Cadherin domains are found at residues 50–157 (EWVK…PPIF), 158–267 (SQTI…FPVL), 268–388 (RESQ…PPSK), and 384–495 (RPPS…CPSV). The Extracellular segment spans residues 50 to 617 (EWVKFAKPCR…YGESSWRLGP (568 aa)). N-linked (GlcNAc...) asparagine glycosylation is found at asparagine 110 and asparagine 180. Residues asparagine 459 and asparagine 546 are each glycosylated (N-linked (GlcNAc...) asparagine). A helical transmembrane segment spans residues 618-638 (AAIGLILLGLLMLLLAPLLLL). The Cytoplasmic portion of the chain corresponds to 639 to 993 (TCDCGSGPIG…LYTKETCSHL (355 aa)). Positions 641–714 (DCGSGPIGGA…NTYAGGTMVE (74 aa)) are required for interaction with CTNND1 and localization at cell-cell junctions. The disordered stretch occupies residues 845-876 (AKQAKPGPKDSGSGADTCARSMEVPQSGSNRY). Desmoglein repeat repeat units lie at residues 905 to 930 (MSTS…LLTE) and 931 to 961 (TYST…ERVI).

As to quaternary structure, homodimer. Part of a complex that contains DSG3, PKP1, YAP1 and YWHAG; the complex is required for localization of DSG3 and YAP1 to the cell membrane in keratinocytes. Interacts with PKP2. Interacts with CTNND1; the interaction facilitates DSG3 localization and retention at cell-cell junctions. Interacts with CDH1; the interaction is required for CDH1 localization to developing adherens junctions. Interacts with RAC1; the interaction is required for DSG3 translocation to cell-cell junctions, organization of cortical F-actin bundles and actin anchoring at cell-cell junctions. Interacts with DSC3; the interaction may limit the interaction of DSC3 with p38MAPK family members and therefore repress p38MAPK signaling activation. In terms of tissue distribution, expressed in the basal layer of the outer root sheath of the telogen hair club, specifically at the cell membrane between the apex of the cells and the surrounding hair club (at protein level). Expression is less abundant between the lateral margins of the outer root sheath basal cells (at protein level). Expressed in epidermis. Expressed in the epithelium of the tongue.

The protein resides in the cell membrane. It is found in the cell junction. The protein localises to the desmosome. Its subcellular location is the cytoplasm. It localises to the tight junction. In terms of biological role, a component of desmosome cell-cell junctions which are required for positive regulation of cellular adhesion. Required for adherens and desmosome junction assembly in response to mechanical force in keratinocytes. Required for desmosome-mediated cell-cell adhesion of cells surrounding the telogen hair club and the basal layer of the outer root sheath epithelium, consequently is essential for the anchoring of telogen hairs in the hair follicle. Required for the maintenance of the epithelial barrier via promoting desmosome-mediated intercellular attachment of suprabasal epithelium to basal cells. May play a role in the protein stability of the desmosome plaque components DSP, JUP, PKP1, PKP2 and PKP3. Required for YAP1 localization at the plasma membrane in keratinocytes in response to mechanical strain, via the formation of an interaction complex composed of DSG3, PKP1 and YWHAG. May also be involved in the positive regulation of YAP1 target gene transcription and as a result cell proliferation. Positively regulates cellular contractility and cell junction formation via organization of cortical F-actin bundles and anchoring of actin to tight junctions, in conjunction with RAC1. The cytoplasmic pool of DSG3 is required for the localization of CDH1 and CTNNB1 at developing adherens junctions, potentially via modulation of SRC activity. Inhibits keratinocyte migration via suppression of p38MAPK signaling, may therefore play a role in moderating wound healing. The protein is Desmoglein-3 (Dsg3) of Mus musculus (Mouse).